A 321-amino-acid polypeptide reads, in one-letter code: Acetyl-coenzyme A carboxylase carboxyl transferase subunit alpha (321 aa).

Residues 32–293 form the CoA carboxyltransferase C-terminal domain; that stretch reads DISEEIARLQ…KRVLQDQLKE (262 aa).

It belongs to the AccA family. As to quaternary structure, acetyl-CoA carboxylase is a heterohexamer composed of biotin carboxyl carrier protein (AccB), biotin carboxylase (AccC) and two subunits each of ACCase subunit alpha (AccA) and ACCase subunit beta (AccD).

The protein localises to the cytoplasm. The catalysed reaction is N(6)-carboxybiotinyl-L-lysyl-[protein] + acetyl-CoA = N(6)-biotinyl-L-lysyl-[protein] + malonyl-CoA. Its pathway is lipid metabolism; malonyl-CoA biosynthesis; malonyl-CoA from acetyl-CoA: step 1/1. In terms of biological role, component of the acetyl coenzyme A carboxylase (ACC) complex. First, biotin carboxylase catalyzes the carboxylation of biotin on its carrier protein (BCCP) and then the CO(2) group is transferred by the carboxyltransferase to acetyl-CoA to form malonyl-CoA. The sequence is that of Acetyl-coenzyme A carboxylase carboxyl transferase subunit alpha from Chromobacterium violaceum (strain ATCC 12472 / DSM 30191 / JCM 1249 / CCUG 213 / NBRC 12614 / NCIMB 9131 / NCTC 9757 / MK).